The sequence spans 570 residues: Proline--tRNA ligase (570 aa).

The protein belongs to the class-II aminoacyl-tRNA synthetase family. ProS type 1 subfamily. Homodimer.

It localises to the cytoplasm. It catalyses the reaction tRNA(Pro) + L-proline + ATP = L-prolyl-tRNA(Pro) + AMP + diphosphate. In terms of biological role, catalyzes the attachment of proline to tRNA(Pro) in a two-step reaction: proline is first activated by ATP to form Pro-AMP and then transferred to the acceptor end of tRNA(Pro). As ProRS can inadvertently accommodate and process non-cognate amino acids such as alanine and cysteine, to avoid such errors it has two additional distinct editing activities against alanine. One activity is designated as 'pretransfer' editing and involves the tRNA(Pro)-independent hydrolysis of activated Ala-AMP. The other activity is designated 'posttransfer' editing and involves deacylation of mischarged Ala-tRNA(Pro). The misacylated Cys-tRNA(Pro) is not edited by ProRS. The protein is Proline--tRNA ligase of Acidithiobacillus ferrooxidans (strain ATCC 23270 / DSM 14882 / CIP 104768 / NCIMB 8455) (Ferrobacillus ferrooxidans (strain ATCC 23270)).